The sequence spans 277 residues: Methyltransferase adrK (277 aa).

Residues 123 to 124, 150 to 151, and 151 to 152 each bind S-adenosyl-L-methionine; these read DL, DV, and VL.

The protein belongs to the class I-like SAM-binding methyltransferase superfamily. As to quaternary structure, homodimer.

The protein operates within secondary metabolite biosynthesis; terpenoid biosynthesis. Methyltransferase; part of the gene cluster that mediates the biosynthesis of andrastins, meroterpenoid compounds that exhibit inhibitory activity against ras farnesyltransferase, suggesting that they could be promising leads for antitumor agents. The first step of the pathway is the synthesis of 3,5-dimethylorsellinic acid (DMOA) by the polyketide synthase adrD via condensation of one acetyl-CoA starter unit with 3 malonyl-CoA units and 2 methylations. DMAO is then converted to farnesyl-DMAO by the prenyltransferase adrG. The methyltransferase adrK catalyzes the methylation of the carboxyl group of farnesyl-DMAO to farnesyl-DMAO methyl ester which is further converted to epoxyfarnesyl-DMAO methyl ester by the FAD-dependent monooxygenase adrH. The terpene cyclase adrI then catalyzes the carbon skeletal rearrangement to generate the andrastin E, the first compound in the pathway having the andrastin scaffold, with the tetracyclic ring system. The post-cyclization tailoring enzymes adrF, adrE, adrJ, and adrA, are involved in the conversion of andrastin E into andrastin A. The short chain dehydrogenase adrF is responsible for the oxidation of the C-3 a hydroxyl group of andrastin E to yield the corresponding ketone, andrastin D. The ketoreductase adrE stereoselectively reduces the carbonyl moiety to reverse the stereochemistry of the C-3 position to yield andrastin F. The acetyltransferase adrJ is the acetyltransferase that attaches the acetyl group to the C-3 hydroxyl group of andrastin F to yield andrastin C. Finally, the cytochrome P450 monooxygenase adrA catalyzes two sequential oxidation reactions of the C-23 methyl group, to generate the corresponding alcohol andrastin B, and aldehyde andrastin A. The chain is Methyltransferase adrK from Penicillium rubens (strain ATCC 28089 / DSM 1075 / NRRL 1951 / Wisconsin 54-1255) (Penicillium chrysogenum).